A 750-amino-acid polypeptide reads, in one-letter code: Glutathione biosynthesis bifunctional protein GshAB (750 aa).

A glutamate--cysteine ligase region spans residues 1 to 333; the sequence is MIIDRLLQRS…EANRLNDLIA (333 aa). A disordered region spans residues 32-51; the sequence is QPTQRVAQTPHPKTLGSRNY. The 259-residue stretch at 489–747 folds into the ATP-grasp domain; it reads KKILDEKHFP…ITPRILAKLF (259 aa). 516–574 is an ATP binding site; sequence SQIQDKPIVVKPKSTNFGLGISIFKTSANLASYEKAIDIAFTEDSAILVEEYIEGTEYR. 3 residues coordinate Mg(2+): Asp-696, Glu-717, and Asn-719. Positions 696, 717, and 719 each coordinate Mn(2+).

This sequence in the N-terminal section; belongs to the glutamate--cysteine ligase type 1 family. Type 2 subfamily. In terms of assembly, monomer. Requires Mg(2+) as cofactor. Mn(2+) serves as cofactor.

It catalyses the reaction L-cysteine + L-glutamate + ATP = gamma-L-glutamyl-L-cysteine + ADP + phosphate + H(+). The enzyme catalyses gamma-L-glutamyl-L-cysteine + glycine + ATP = glutathione + ADP + phosphate + H(+). The protein operates within sulfur metabolism; glutathione biosynthesis; glutathione from L-cysteine and L-glutamate: step 1/2. Its pathway is sulfur metabolism; glutathione biosynthesis; glutathione from L-cysteine and L-glutamate: step 2/2. Its function is as follows. Synthesizes glutathione from L-glutamate and L-cysteine via gamma-L-glutamyl-L-cysteine. The protein is Glutathione biosynthesis bifunctional protein GshAB of Streptococcus agalactiae serotype III (strain NEM316).